We begin with the raw amino-acid sequence, 180 residues long: Large ribosomal subunit protein uL6 (180 aa).

The protein belongs to the universal ribosomal protein uL6 family. As to quaternary structure, part of the 50S ribosomal subunit.

In terms of biological role, this protein binds to the 23S rRNA, and is important in its secondary structure. It is located near the subunit interface in the base of the L7/L12 stalk, and near the tRNA binding site of the peptidyltransferase center. This Clostridium botulinum (strain Loch Maree / Type A3) protein is Large ribosomal subunit protein uL6.